The following is a 341-amino-acid chain: Glycerol-3-phosphate dehydrogenase [NAD(P)+] (341 aa).

4 residues coordinate NADPH: serine 14, phenylalanine 15, arginine 35, and lysine 108. Sn-glycerol 3-phosphate contacts are provided by lysine 108 and glycine 136. Alanine 140 is an NADPH binding site. The sn-glycerol 3-phosphate site is built by lysine 191, aspartate 244, serine 254, arginine 255, and asparagine 256. The active-site Proton acceptor is lysine 191. Residue arginine 255 participates in NADPH binding. The NADPH site is built by valine 279 and glutamate 281.

It belongs to the NAD-dependent glycerol-3-phosphate dehydrogenase family.

It localises to the cytoplasm. It catalyses the reaction sn-glycerol 3-phosphate + NAD(+) = dihydroxyacetone phosphate + NADH + H(+). It carries out the reaction sn-glycerol 3-phosphate + NADP(+) = dihydroxyacetone phosphate + NADPH + H(+). It functions in the pathway membrane lipid metabolism; glycerophospholipid metabolism. In terms of biological role, catalyzes the reduction of the glycolytic intermediate dihydroxyacetone phosphate (DHAP) to sn-glycerol 3-phosphate (G3P), the key precursor for phospholipid synthesis. In Pseudomonas savastanoi pv. phaseolicola (strain 1448A / Race 6) (Pseudomonas syringae pv. phaseolicola (strain 1448A / Race 6)), this protein is Glycerol-3-phosphate dehydrogenase [NAD(P)+].